Consider the following 127-residue polypeptide: uncharacterized protein (127 aa).

2 consecutive transmembrane segments (helical) span residues 64–84 and 101–118; these read GYYITNLICIVVGLFLYFGYL and FFHFFFTILAVTSRAIYY.

It is found in the membrane. This is an uncharacterized protein from Saccharomyces cerevisiae (strain ATCC 204508 / S288c) (Baker's yeast).